The primary structure comprises 729 residues: Fatty acid oxidation complex subunit alpha (729 aa).

The enoyl-CoA hydratase/isomerase stretch occupies residues 1–189; it reads MLYKGDTLYL…KIGLVDGVVK (189 aa). Aspartate 296 contributes to the substrate binding site. A 3-hydroxyacyl-CoA dehydrogenase region spans residues 311-729; sequence ETPKQAAVLG…ARPVGDLKTA (419 aa). Residues methionine 324, aspartate 343, 400–402, lysine 407, and serine 429 contribute to the NAD(+) site; that span reads VVE. Residue histidine 450 is the For 3-hydroxyacyl-CoA dehydrogenase activity of the active site. An NAD(+)-binding site is contributed by asparagine 453. Substrate contacts are provided by asparagine 500 and tyrosine 660. Residues 708-729 are disordered; it reads RHNEPYYPPVEPARPVGDLKTA.

In the N-terminal section; belongs to the enoyl-CoA hydratase/isomerase family. It in the C-terminal section; belongs to the 3-hydroxyacyl-CoA dehydrogenase family. Heterotetramer of two alpha chains (FadB) and two beta chains (FadA).

It carries out the reaction a (3S)-3-hydroxyacyl-CoA + NAD(+) = a 3-oxoacyl-CoA + NADH + H(+). The enzyme catalyses a (3S)-3-hydroxyacyl-CoA = a (2E)-enoyl-CoA + H2O. It catalyses the reaction a 4-saturated-(3S)-3-hydroxyacyl-CoA = a (3E)-enoyl-CoA + H2O. The catalysed reaction is (3S)-3-hydroxybutanoyl-CoA = (3R)-3-hydroxybutanoyl-CoA. It carries out the reaction a (3Z)-enoyl-CoA = a 4-saturated (2E)-enoyl-CoA. The enzyme catalyses a (3E)-enoyl-CoA = a 4-saturated (2E)-enoyl-CoA. It functions in the pathway lipid metabolism; fatty acid beta-oxidation. Its function is as follows. Involved in the aerobic and anaerobic degradation of long-chain fatty acids via beta-oxidation cycle. Catalyzes the formation of 3-oxoacyl-CoA from enoyl-CoA via L-3-hydroxyacyl-CoA. It can also use D-3-hydroxyacyl-CoA and cis-3-enoyl-CoA as substrate. This is Fatty acid oxidation complex subunit alpha from Escherichia coli O8 (strain IAI1).